We begin with the raw amino-acid sequence, 134 residues long: Cystatin-1 (134 aa).

A signal peptide spans 1-17 (MKAIYLILTVLCGFSAS). In terms of domain architecture, Cystatin spans 21–116 (GGWRDKDVDD…CTAIIWTRSW (96 aa)). The Secondary area of contact signature appears at 65–69 (QVVSG). Intrachain disulfides connect Cys-83–Cys-96 and Cys-107–Cys-127.

Belongs to the cystatin family. As to expression, expressed by the venom gland.

The protein localises to the secreted. Its function is as follows. Inhibits various C1 cysteine proteases. This protein has no toxic activity and its function in the venom is unknown. It may play a role as a housekeeping or regulatory protein. The polypeptide is Cystatin-1 (Chilobrachys guangxiensis (Chinese earth tiger tarantula)).